Consider the following 451-residue polypeptide: tRNA-2-methylthio-N(6)-dimethylallyladenosine synthase (451 aa).

The 117-residue stretch at Arg-5–Gly-121 folds into the MTTase N-terminal domain. Residues Cys-14, Cys-50, Cys-84, Cys-156, Cys-160, and Cys-163 each coordinate [4Fe-4S] cluster. One can recognise a Radical SAM core domain in the interval Arg-142 to Glu-379. A TRAM domain is found at Gln-382–Glu-446.

It belongs to the methylthiotransferase family. MiaB subfamily. In terms of assembly, monomer. The cofactor is [4Fe-4S] cluster.

Its subcellular location is the cytoplasm. The enzyme catalyses N(6)-dimethylallyladenosine(37) in tRNA + (sulfur carrier)-SH + AH2 + 2 S-adenosyl-L-methionine = 2-methylsulfanyl-N(6)-dimethylallyladenosine(37) in tRNA + (sulfur carrier)-H + 5'-deoxyadenosine + L-methionine + A + S-adenosyl-L-homocysteine + 2 H(+). Functionally, catalyzes the methylthiolation of N6-(dimethylallyl)adenosine (i(6)A), leading to the formation of 2-methylthio-N6-(dimethylallyl)adenosine (ms(2)i(6)A) at position 37 in tRNAs that read codons beginning with uridine. The polypeptide is tRNA-2-methylthio-N(6)-dimethylallyladenosine synthase (Picosynechococcus sp. (strain ATCC 27264 / PCC 7002 / PR-6) (Agmenellum quadruplicatum)).